The following is a 117-amino-acid chain: Toxin CSTX-8 (117 aa).

Residues 1–20 (MKVLVICAVLFLAIFSNSSA) form the signal peptide. Residues 21-47 (ETEDDFLEDESFQADDVIPFLASEQVR) constitute a propeptide that is removed on maturation. 4 disulfides stabilise this stretch: Cys50–Cys65, Cys57–Cys74, Cys64–Cys95, and Cys76–Cys93. A propeptide spanning residues 82–87 (RSETDR) is cleaved from the precursor. At Thr116 the chain carries Threonine amide.

The protein belongs to the neurotoxin 19 (CSTX) family. 12 subfamily. Heterodimer of A and B chains; disulfide-linked. Interacts with CSTX-1 (AC P81694), and with CSTX-9 (AC P58604). In terms of tissue distribution, expressed by the venom gland.

It localises to the secreted. The protein resides in the target cell membrane. Its function is as follows. Synergistic toxin that induces or increases a cytolytic effect when combined with CSTX-1 (AC P81694) or CSTX-9 (AC P58604). When alone, has a weak insecticidal activity, with an unknown molecular target. The chain is Toxin CSTX-8 from Cupiennius salei (American wandering spider).